The primary structure comprises 161 residues: Lincosamide resistance protein (161 aa).

The polypeptide is Lincosamide resistance protein (linA) (Staphylococcus haemolyticus).